A 430-amino-acid chain; its full sequence is Glucose-6-phosphate isomerase (430 aa).

E284 serves as the catalytic Proton donor. Residues H305 and K420 contribute to the active site.

This sequence belongs to the GPI family.

The protein resides in the cytoplasm. It carries out the reaction alpha-D-glucose 6-phosphate = beta-D-fructose 6-phosphate. It participates in carbohydrate biosynthesis; gluconeogenesis. Its pathway is carbohydrate degradation; glycolysis; D-glyceraldehyde 3-phosphate and glycerone phosphate from D-glucose: step 2/4. Its function is as follows. Catalyzes the reversible isomerization of glucose-6-phosphate to fructose-6-phosphate. The sequence is that of Glucose-6-phosphate isomerase from Mycoplasma pneumoniae (strain ATCC 29342 / M129 / Subtype 1) (Mycoplasmoides pneumoniae).